Consider the following 295-residue polypeptide: Fatty acyl-CoA reductase (295 aa).

Residue 21–28 (TGASSGIG) participates in NADP(+) binding. Position 153 (S153) interacts with substrate. The Proton acceptor role is filled by Y166.

The protein belongs to the short-chain dehydrogenases/reductases (SDR) family.

It catalyses the reaction hexadecanal + NADP(+) + CoA = hexadecanoyl-CoA + NADPH + H(+). Its function is as follows. Catalyzes the NADPH-dependent reduction of long chain acyl-CoA (with chain lengths of 14 to 22 carbons) to the corresponding aldehyde. This is Fatty acyl-CoA reductase (acr1) from Acinetobacter baylyi (strain ATCC 33305 / BD413 / ADP1).